The sequence spans 1573 residues: Pentafunctional AROM polypeptide (1573 aa).

The segment at 1 to 384 (MSNESNIITV…YEKHATVVSD (384 aa)) is 3-dehydroquinate synthase. Residues 46–48 (DSN), 83–86 (ESSK), 114–116 (GGV), and D119 each bind NAD(+). Position 130 (R130) interacts with 7-phospho-2-dehydro-3-deoxy-D-arabino-heptonate. 139-140 (TT) lines the NAD(+) pocket. Residues D146 and K152 each contribute to the 7-phospho-2-dehydro-3-deoxy-D-arabino-heptonate site. K161 is an NAD(+) binding site. Residue N162 participates in 7-phospho-2-dehydro-3-deoxy-D-arabino-heptonate binding. NAD(+)-binding positions include 179–182 (FLHT) and N190. E194 provides a ligand contact to Zn(2+). 7-phospho-2-dehydro-3-deoxy-D-arabino-heptonate-binding positions include 194–197 (EIIK) and K250. E260 serves as the catalytic Proton acceptor; for 3-dehydroquinate synthase activity. 7-phospho-2-dehydro-3-deoxy-D-arabino-heptonate is bound by residues 264–268 (RNLLN) and H271. Residue H271 participates in Zn(2+) binding. The active-site Proton acceptor; for 3-dehydroquinate synthase activity is H275. 7-phospho-2-dehydro-3-deoxy-D-arabino-heptonate contacts are provided by H287 and K356. H287 provides a ligand contact to Zn(2+). An EPSP synthase region spans residues 397 to 843 (VDEFTKSSWD…WDVLHQSFGV (447 aa)). The active-site For EPSP synthase activity is the C825. The tract at residues 863–1058 (NASIILIGMR…KTKKRSTFLT (196 aa)) is shikimate kinase. 870-877 (GMRGAGKT) is an ATP binding site. The tract at residues 1059 to 1280 (LNYPRIEDAL…AAPGQLTVKQ (222 aa)) is 3-dehydroquinase. The Proton acceptor; for 3-dehydroquinate dehydratase activity role is filled by H1182. Residue K1211 is the Schiff-base intermediate with substrate; for 3-dehydroquinate dehydratase activity of the active site. Residues 1293–1573 (PEKFFLFGKP…FDAVYQKVIE (281 aa)) are shikimate dehydrogenase.

In the N-terminal section; belongs to the sugar phosphate cyclases superfamily. Dehydroquinate synthase family. The protein in the 2nd section; belongs to the EPSP synthase family. This sequence in the 3rd section; belongs to the shikimate kinase family. It in the 4th section; belongs to the type-I 3-dehydroquinase family. In the C-terminal section; belongs to the shikimate dehydrogenase family. Homodimer. Requires Zn(2+) as cofactor.

The protein resides in the cytoplasm. It catalyses the reaction 7-phospho-2-dehydro-3-deoxy-D-arabino-heptonate = 3-dehydroquinate + phosphate. It carries out the reaction 3-dehydroquinate = 3-dehydroshikimate + H2O. The enzyme catalyses shikimate + NADP(+) = 3-dehydroshikimate + NADPH + H(+). The catalysed reaction is shikimate + ATP = 3-phosphoshikimate + ADP + H(+). It catalyses the reaction 3-phosphoshikimate + phosphoenolpyruvate = 5-O-(1-carboxyvinyl)-3-phosphoshikimate + phosphate. It functions in the pathway metabolic intermediate biosynthesis; chorismate biosynthesis; chorismate from D-erythrose 4-phosphate and phosphoenolpyruvate: step 2/7. Its pathway is metabolic intermediate biosynthesis; chorismate biosynthesis; chorismate from D-erythrose 4-phosphate and phosphoenolpyruvate: step 3/7. The protein operates within metabolic intermediate biosynthesis; chorismate biosynthesis; chorismate from D-erythrose 4-phosphate and phosphoenolpyruvate: step 4/7. It participates in metabolic intermediate biosynthesis; chorismate biosynthesis; chorismate from D-erythrose 4-phosphate and phosphoenolpyruvate: step 5/7. It functions in the pathway metabolic intermediate biosynthesis; chorismate biosynthesis; chorismate from D-erythrose 4-phosphate and phosphoenolpyruvate: step 6/7. In terms of biological role, the AROM polypeptide catalyzes 5 consecutive enzymatic reactions in prechorismate polyaromatic amino acid biosynthesis. In Schizosaccharomyces pombe (strain 972 / ATCC 24843) (Fission yeast), this protein is Pentafunctional AROM polypeptide.